Reading from the N-terminus, the 335-residue chain is Methionine import ATP-binding protein MetN (335 aa).

Residues 2–241 (IEFQRLHKSY…PKHVTTRRFV (240 aa)) form the ABC transporter domain. 38–45 (GHSGAGKS) is an ATP binding site.

This sequence belongs to the ABC transporter superfamily. Methionine importer (TC 3.A.1.24) family. In terms of assembly, the complex is composed of two ATP-binding proteins (MetN), two transmembrane proteins (MetI) and a solute-binding protein (MetQ).

The protein localises to the cell inner membrane. It catalyses the reaction L-methionine(out) + ATP + H2O = L-methionine(in) + ADP + phosphate + H(+). The catalysed reaction is D-methionine(out) + ATP + H2O = D-methionine(in) + ADP + phosphate + H(+). Its function is as follows. Part of the ABC transporter complex MetNIQ involved in methionine import. Responsible for energy coupling to the transport system. The protein is Methionine import ATP-binding protein MetN of Xanthomonas oryzae pv. oryzae (strain MAFF 311018).